The following is a 346-amino-acid chain: Phosphoribosylformylglycinamidine cyclo-ligase (346 aa).

This sequence belongs to the AIR synthase family.

The protein resides in the cytoplasm. It carries out the reaction 2-formamido-N(1)-(5-O-phospho-beta-D-ribosyl)acetamidine + ATP = 5-amino-1-(5-phospho-beta-D-ribosyl)imidazole + ADP + phosphate + H(+). It participates in purine metabolism; IMP biosynthesis via de novo pathway; 5-amino-1-(5-phospho-D-ribosyl)imidazole from N(2)-formyl-N(1)-(5-phospho-D-ribosyl)glycinamide: step 2/2. This Shewanella halifaxensis (strain HAW-EB4) protein is Phosphoribosylformylglycinamidine cyclo-ligase.